The sequence spans 194 residues: ECF RNA polymerase sigma factor SigX (194 aa).

The short motif at 32–45 (DLLQEVYIRVLNSY) is the Polymerase core binding element. The segment at residues 136–155 (IQETAKALRFSESKVKTTQH) is a DNA-binding region (H-T-H motif).

It belongs to the sigma-70 factor family. ECF subfamily. In terms of assembly, interacts transiently with the RNAP core.

It localises to the cell membrane. In terms of biological role, sigma factors are initiation factors that promote the attachment of RNA polymerase (RNAP) to specific initiation sites and are then released. May be involved in the regulation of iron metabolism. Associates with RNAP core during early growth phases, association decreases as cells age. The chain is ECF RNA polymerase sigma factor SigX (sigX) from Bacillus subtilis (strain 168).